A 629-amino-acid polypeptide reads, in one-letter code: Protein SPT2 homolog (629 aa).

An important for interaction with DNA region spans residues 1–522 (MDFDSVLSIA…SGHRILVKPS (522 aa)). The stretch at 45 to 72 (QAFLKKKAVEQKNKEQQDKKAKEDLLAK) forms a coiled coil. The span at 53–93 (VEQKNKEQQDKKAKEDLLAKRVELKSDRKARAMASRTKDNF) shows a compositional bias: basic and acidic residues. Disordered stretches follow at residues 53–181 (VEQK…ASSS), 206–533 (KTEE…TSSY), and 608–629 (EDEEEERRELEEMQRKNAKKRK). Residues 111-123 (KGSSTEEQQSSTK) show a composition bias toward polar residues. Residues 127–144 (GDYDDEDNFDYEGTDSES) are compositionally biased toward acidic residues. Residues 203–228 (VVKKTEERLRTAEEIRELEMERRVKK) are a coiled coil. 2 stretches are compositionally biased toward basic and acidic residues: residues 206–247 (KTEE…KDSR) and 257–277 (KHVDRDGKNGRFPRPSEEKHQ). 7 stretches are compositionally biased toward polar residues: residues 278-297 (SSSTSKKPKLQASSERTPTS), 305-327 (SNSGSSGALNSKSAMKNGASFQA), 335-345 (SQGQRPATPSD), 353-364 (VSLTQAKSSISG), 387-398 (SNFSTSGPSQKP), 437-450 (NLQSQQFPGSSRAS), and 462-490 (SGSQINRMSSGPGRSQCTVVSETISTKNI). The important for interaction with histones stretch occupies residues 523 to 629 (GPALPPITSS…MQRKNAKKRK (107 aa)). A coiled-coil region spans residues 591-629 (WKEQQKEEARSLRMAVLEDEEEERRELEEMQRKNAKKRK).

Belongs to the SPT2 family. In terms of assembly, interacts with histones. Interacts with a heterotetrameric complex formed by histone H3 and H4, especially when the histone tetramer is not bound to DNA.

The protein localises to the nucleus. It is found in the nucleolus. Histone chaperone that stabilizes pre-existing histone tetramers and regulates replication-independent histone exchange on chromatin. Required for normal chromatin refolding in the coding region of transcribed genes, and for the suppression of spurious transcription. Binds DNA and histones and promotes nucleosome assembly (in vitro). Facilitates formation of tetrameric histone complexes containing histone H3 and H4. Modulates RNA polymerase 1-mediated transcription. Binds DNA, with a preference for branched DNA species, such as Y-form DNA and Holliday junction DNA. This Danio rerio (Zebrafish) protein is Protein SPT2 homolog (spty2d1).